A 156-amino-acid polypeptide reads, in one-letter code: Small ribosomal subunit protein uS7c (156 aa).

This sequence belongs to the universal ribosomal protein uS7 family. In terms of assembly, part of the 30S ribosomal subunit.

It localises to the plastid. Its function is as follows. One of the primary rRNA binding proteins, it binds directly to 16S rRNA where it nucleates assembly of the head domain of the 30S subunit. The chain is Small ribosomal subunit protein uS7c (rps7) from Prototheca wickerhamii.